The chain runs to 400 residues: NADH dehydrogenase-like protein MT1860 (400 aa).

This sequence belongs to the NADH dehydrogenase family. FAD is required as a cofactor.

In Mycobacterium tuberculosis (strain CDC 1551 / Oshkosh), this protein is NADH dehydrogenase-like protein MT1860.